Here is a 97-residue protein sequence, read N- to C-terminus: MAEPLKSVDYEVFGTVQGVCFRMYTEGEAKKRGLVGWVKNTSKGTVTGQVQGPEEKVNSMKSWLSKVGSPSSRIDRADFSNEKTISKLEYSNFSIRY.

Ala-2 is modified (N-acetylalanine). The Acylphosphatase-like domain maps to 7 to 97 (SVDYEVFGTV…LEYSNFSIRY (91 aa)). Active-site residues include Arg-22 and Asn-40. Phosphoserine is present on Ser-91.

The protein belongs to the acylphosphatase family.

The enzyme catalyses an acyl phosphate + H2O = a carboxylate + phosphate + H(+). Functionally, its physiological role is not yet clear. This is Acylphosphatase-2 (Acyp2) from Rattus norvegicus (Rat).